Reading from the N-terminus, the 579-residue chain is Phosphatidylinositol/phosphatidylcholine transfer protein SFH9 (579 aa).

Positions 145–319 (EYEEVQQYYP…FLGGNCKCAH (175 aa)) constitute a CRAL-TRIO domain. The segment at 372–419 (DMSSPDGGHVRERESHPEHDKRAQLSNQAEAVGVGRMEQSDSTSPLPN) is disordered. The segment covering 379–394 (GHVRERESHPEHDKRA) has biased composition (basic and acidic residues). The stretch at 512-539 (QEKEDILRDSLDRIKSIEQDLQKTKKAL) forms a coiled coil.

This sequence belongs to the SFH family.

Its subcellular location is the golgi apparatus membrane. It localises to the cell membrane. Functionally, required for transport of secretory proteins from the Golgi complex. Catalyzes the transfer of phosphatidylinositol and phosphatidylcholine between membranes in vitro. The sequence is that of Phosphatidylinositol/phosphatidylcholine transfer protein SFH9 (SFH9) from Arabidopsis thaliana (Mouse-ear cress).